We begin with the raw amino-acid sequence, 165 residues long: Small ribosomal subunit protein bS16 (165 aa).

Residues tryptophan 84–glycine 165 form a disordered region. Over residues asparagine 89–alanine 130 the composition is skewed to basic and acidic residues. Positions alanine 131–alanine 157 are enriched in low complexity.

It belongs to the bacterial ribosomal protein bS16 family.

The polypeptide is Small ribosomal subunit protein bS16 (Caulobacter vibrioides (strain ATCC 19089 / CIP 103742 / CB 15) (Caulobacter crescentus)).